Consider the following 567-residue polypeptide: Phosphoglucomutase-like protein 5 (567 aa).

Positions 1 to 26 are disordered; the sequence is MEGSPIPVLTVPTAPYEDQRPAGGGG. Thr-120 carries the phosphothreonine modification. The residue at position 122 (Ser-122) is a Phosphoserine.

It belongs to the phosphohexose mutase family. As to quaternary structure, interacts with DMD/dystrophin; the interaction is direct. Interacts with UTRN/utrophin. In terms of tissue distribution, detected in smooth and cardiac muscle at high levels and in skeletal muscle at low level. Present in other tissues due to vascular or other smooth muscle component. Low levels are present in liver, kidney, skin and brain (at protein level).

It localises to the cell junction. The protein resides in the adherens junction. Its subcellular location is the cytoplasm. The protein localises to the cytoskeleton. It is found in the cell membrane. It localises to the sarcolemma. In terms of biological role, component of adherens-type cell-cell and cell-matrix junctions. Has no phosphoglucomutase activity in vitro. In Homo sapiens (Human), this protein is Phosphoglucomutase-like protein 5.